A 390-amino-acid chain; its full sequence is Elongation factor Ts, mitochondrial (390 aa).

It belongs to the EF-Ts family.

It is found in the mitochondrion. Functionally, associates with the EF-Tu.GDP complex and induces the exchange of GDP to GTP. It remains bound to the aminoacyl-tRNA.EF-Tu.GTP complex up to the GTP hydrolysis stage on the ribosome. In Plasmodium falciparum (isolate 3D7), this protein is Elongation factor Ts, mitochondrial.